Reading from the N-terminus, the 338-residue chain is MKVYYDKDCNLAVLKNKTVAIIGYGSQGHAHALNLNDSGIDVIVGLRKESPSVKKATDAGLKVLGVAEAAKAADIVMILLPDETQGDVYRAEIGPNLKEGATIAFGHGFNIHFGQIEPRADINVFMVAPKGPGHMVRHEYTRGGGVPCLVAIHQDPSGKTKEIALAYASAVGGGRSGIIETNFREETETDLFGEQAVLCGGISALIQAGFETLVEAGYAPEMAYFECLHETKLIVDLIYEGGIANMRYSVSNTAEYGDLTRGPRVVNEETKWEMKKILDEIQTGEFCKEWMLENKANKPTFNALRRRGSEHQIEEVGARLRAMMPWIGKNKIVDKAKN.

Positions 1–181 (MKVYYDKDCN…GGGRSGIIET (181 aa)) constitute a KARI N-terminal Rossmann domain. NADP(+) contacts are provided by residues 24-27 (YGSQ), R47, S50, S52, and 82-85 (DETQ). H107 is a catalytic residue. G133 is a binding site for NADP(+). Residues 182 to 327 (NFREETETDL…ARLRAMMPWI (146 aa)) enclose the KARI C-terminal knotted domain. Mg(2+)-binding residues include D190, E194, E226, and E230. Substrate is bound at residue S251.

The protein belongs to the ketol-acid reductoisomerase family. The cofactor is Mg(2+).

It catalyses the reaction (2R)-2,3-dihydroxy-3-methylbutanoate + NADP(+) = (2S)-2-acetolactate + NADPH + H(+). The enzyme catalyses (2R,3R)-2,3-dihydroxy-3-methylpentanoate + NADP(+) = (S)-2-ethyl-2-hydroxy-3-oxobutanoate + NADPH + H(+). The protein operates within amino-acid biosynthesis; L-isoleucine biosynthesis; L-isoleucine from 2-oxobutanoate: step 2/4. It participates in amino-acid biosynthesis; L-valine biosynthesis; L-valine from pyruvate: step 2/4. Its function is as follows. Involved in the biosynthesis of branched-chain amino acids (BCAA). Catalyzes an alkyl-migration followed by a ketol-acid reduction of (S)-2-acetolactate (S2AL) to yield (R)-2,3-dihydroxy-isovalerate. In the isomerase reaction, S2AL is rearranged via a Mg-dependent methyl migration to produce 3-hydroxy-3-methyl-2-ketobutyrate (HMKB). In the reductase reaction, this 2-ketoacid undergoes a metal-dependent reduction by NADPH to yield (R)-2,3-dihydroxy-isovalerate. This is Ketol-acid reductoisomerase (NADP(+)) from Pelobacter propionicus (strain DSM 2379 / NBRC 103807 / OttBd1).